The sequence spans 338 residues: Legumin B (338 aa).

Residues 16–162 (SLNTKEDTAK…RQHSKGRKNG (147 aa)) form a disordered region. Over residues 18–44 (NTKEDTAKRLRSPQDERGQIVKVEDGL) the composition is skewed to basic and acidic residues. Acidic residues-rich tracts occupy residues 82-92 (DEDEDEEEEEE) and 136-150 (EEEEELEKEEEEEEE). The 148-residue stretch at 174–321 (ENIARPSRGD…AFGLRHSQVA (148 aa)) folds into the Cupin type-1 domain.

It belongs to the 11S seed storage protein (globulins) family. In terms of assembly, hexamer; each subunit is composed of an acidic and a basic chain derived from a single precursor and linked by a disulfide bond.

Functionally, this protein found in the seeds of many leguminous and non-leguminous plants is the source of sulfur-containing amino acids in seed meals. In Pisum sativum (Garden pea), this protein is Legumin B (LEGB).